The primary structure comprises 185 residues: Orotate phosphoribosyltransferase (185 aa).

Residues Arg98, Lys99, Lys102, His104, and 128-136 (EDVTTTGGS) contribute to the 5-phospho-alpha-D-ribose 1-diphosphate site. Thr132 and Arg160 together coordinate orotate.

The protein belongs to the purine/pyrimidine phosphoribosyltransferase family. PyrE subfamily. Homodimer. The cofactor is Mg(2+).

The catalysed reaction is orotidine 5'-phosphate + diphosphate = orotate + 5-phospho-alpha-D-ribose 1-diphosphate. The protein operates within pyrimidine metabolism; UMP biosynthesis via de novo pathway; UMP from orotate: step 1/2. Its function is as follows. Catalyzes the transfer of a ribosyl phosphate group from 5-phosphoribose 1-diphosphate to orotate, leading to the formation of orotidine monophosphate (OMP). In Bradyrhizobium sp. (strain ORS 278), this protein is Orotate phosphoribosyltransferase.